Consider the following 55-residue polypeptide: MAVPKKRTSTSKKRIRKNIWKRKGYWVALKAFSLAKSLSTGNSKSFFVRQTKINK.

This sequence belongs to the bacterial ribosomal protein bL32 family.

Its subcellular location is the plastid. It is found in the chloroplast. This is Large ribosomal subunit protein bL32c from Atropa belladonna (Belladonna).